The sequence spans 308 residues: MTIAFLDVAITIEYVSTAISLVCLPINILFVYILFVERNRPPYNTPFFRLCIHLSIADILMELFSTFFFKFPSFGVFPSTFYKENWSVVPIAGMQYLGHAQAFGIIFIAVNRFTAVHYPIKHRQQWWTPKVTKTLLLIQWITPLFFMAPLFSTDFKFLFSHNSGSVIFAASDARFHKNYFLAMAMVDGILINLIVLLLYGAIFIRVHTHVVVRKPGELALRLALSAFIIFICYLALGVCSLLSALTPPPDAWVYRTMWFVVNDVLCNSSALVLLALNRPIRKAFTRHLGVFSYQGVSTKNHNSLLQAV.

A run of 7 helical transmembrane segments spans residues 15–35, 46–68, 88–108, 135–155, 184–204, 222–242, and 256–276; these read VSTAISLVCLPINILFVYILF, PFFRLCIHLSIADILMELFSTFF, VVPIAGMQYLGHAQAFGIIFI, LLLIQWITPLFFMAPLFSTDF, AMVDGILINLIVLLLYGAIFI, LALSAFIIFICYLALGVCSLL, and TMWFVVNDVLCNSSALVLLAL.

The protein belongs to the nematode receptor-like protein srv family.

Its subcellular location is the membrane. This Caenorhabditis elegans protein is Serpentine receptor class V-1 (srv-1).